Consider the following 184-residue polypeptide: dCTP deaminase (184 aa).

Residues 107–112 (KSTYAR), 131–133 (TLE), Gln152, Tyr166, and Gln176 each bind dCTP. Glu133 functions as the Proton donor/acceptor in the catalytic mechanism.

This sequence belongs to the dCTP deaminase family. Homotrimer.

The catalysed reaction is dCTP + H2O + H(+) = dUTP + NH4(+). Its pathway is pyrimidine metabolism; dUMP biosynthesis; dUMP from dCTP (dUTP route): step 1/2. Its function is as follows. Catalyzes the deamination of dCTP to dUTP. This is dCTP deaminase from Erythrobacter litoralis (strain HTCC2594).